The chain runs to 255 residues: Indole-3-glycerol phosphate synthase (255 aa).

It belongs to the TrpC family.

It catalyses the reaction 1-(2-carboxyphenylamino)-1-deoxy-D-ribulose 5-phosphate + H(+) = (1S,2R)-1-C-(indol-3-yl)glycerol 3-phosphate + CO2 + H2O. The protein operates within amino-acid biosynthesis; L-tryptophan biosynthesis; L-tryptophan from chorismate: step 4/5. The chain is Indole-3-glycerol phosphate synthase from Streptococcus thermophilus (strain ATCC BAA-491 / LMD-9).